Here is a 156-residue protein sequence, read N- to C-terminus: Small ribosomal subunit protein uS7c (156 aa).

Belongs to the universal ribosomal protein uS7 family. In terms of assembly, part of the 30S ribosomal subunit.

The protein resides in the plastid. It localises to the chloroplast. Functionally, one of the primary rRNA binding proteins, it binds directly to 16S rRNA where it nucleates assembly of the head domain of the 30S subunit. This Chlorokybus atmophyticus (Soil alga) protein is Small ribosomal subunit protein uS7c (rps7).